A 442-amino-acid polypeptide reads, in one-letter code: 23S rRNA (uracil(1939)-C(5))-methyltransferase RlmD (442 aa).

One can recognise a TRAM domain in the interval 10-75; that stretch reads AKQTAKNCCK…RQYGRAKANK (66 aa). Residues C88, C94, C97, and C173 each contribute to the [4Fe-4S] cluster site. Q276, F305, N310, E326, N353, and D374 together coordinate S-adenosyl-L-methionine. The active-site Nucleophile is C400.

This sequence belongs to the class I-like SAM-binding methyltransferase superfamily. RNA M5U methyltransferase family. RlmD subfamily.

The catalysed reaction is uridine(1939) in 23S rRNA + S-adenosyl-L-methionine = 5-methyluridine(1939) in 23S rRNA + S-adenosyl-L-homocysteine + H(+). In terms of biological role, catalyzes the formation of 5-methyl-uridine at position 1939 (m5U1939) in 23S rRNA. In Haemophilus ducreyi (strain 35000HP / ATCC 700724), this protein is 23S rRNA (uracil(1939)-C(5))-methyltransferase RlmD.